The sequence spans 236 residues: 5'-methylthioadenosine/S-adenosylhomocysteine nucleosidase (236 aa).

The active-site Proton acceptor is the glutamate 12. Residues glycine 78, isoleucine 153, and 174–175 each bind substrate; that span reads ME. The active-site Proton donor is the aspartate 198.

The protein belongs to the PNP/UDP phosphorylase family. MtnN subfamily.

The catalysed reaction is S-adenosyl-L-homocysteine + H2O = S-(5-deoxy-D-ribos-5-yl)-L-homocysteine + adenine. It carries out the reaction S-methyl-5'-thioadenosine + H2O = 5-(methylsulfanyl)-D-ribose + adenine. The enzyme catalyses 5'-deoxyadenosine + H2O = 5-deoxy-D-ribose + adenine. The protein operates within amino-acid biosynthesis; L-methionine biosynthesis via salvage pathway; S-methyl-5-thio-alpha-D-ribose 1-phosphate from S-methyl-5'-thioadenosine (hydrolase route): step 1/2. Functionally, catalyzes the irreversible cleavage of the glycosidic bond in both 5'-methylthioadenosine (MTA) and S-adenosylhomocysteine (SAH/AdoHcy) to adenine and the corresponding thioribose, 5'-methylthioribose and S-ribosylhomocysteine, respectively. Also cleaves 5'-deoxyadenosine, a toxic by-product of radical S-adenosylmethionine (SAM) enzymes, into 5-deoxyribose and adenine. This chain is 5'-methylthioadenosine/S-adenosylhomocysteine nucleosidase, found in Shewanella baltica (strain OS155 / ATCC BAA-1091).